The chain runs to 295 residues: (R)-3-hydroxydecanoyl-ACP:CoA transacylase (295 aa).

The AB hydrolase-1 domain occupies 28 to 254 (NTIILINGSL…VIRDAGHFLD (227 aa)).

The protein operates within polyester biosynthesis; polyhydroxyalkanoate biosynthesis. In terms of biological role, catalyzes the transfer of the acyl moiety from in vitro synthesized 3-hydroxydecanoyl-CoA to acyl carrier protein. The chain is (R)-3-hydroxydecanoyl-ACP:CoA transacylase (phaG) from Ectopseudomonas oleovorans (Pseudomonas oleovorans).